Reading from the N-terminus, the 64-residue chain is Large ribosomal subunit protein uL30 (64 aa).

The protein belongs to the universal ribosomal protein uL30 family. As to quaternary structure, part of the 50S ribosomal subunit.

In Methylorubrum populi (strain ATCC BAA-705 / NCIMB 13946 / BJ001) (Methylobacterium populi), this protein is Large ribosomal subunit protein uL30.